The sequence spans 296 residues: Bifunctional protein FolD (296 aa).

NADP(+)-binding positions include 166 to 168 (GRS), Ser-195, and Thr-236.

This sequence belongs to the tetrahydrofolate dehydrogenase/cyclohydrolase family. In terms of assembly, homodimer.

It catalyses the reaction (6R)-5,10-methylene-5,6,7,8-tetrahydrofolate + NADP(+) = (6R)-5,10-methenyltetrahydrofolate + NADPH. The catalysed reaction is (6R)-5,10-methenyltetrahydrofolate + H2O = (6R)-10-formyltetrahydrofolate + H(+). Its pathway is one-carbon metabolism; tetrahydrofolate interconversion. Functionally, catalyzes the oxidation of 5,10-methylenetetrahydrofolate to 5,10-methenyltetrahydrofolate and then the hydrolysis of 5,10-methenyltetrahydrofolate to 10-formyltetrahydrofolate. In Dehalococcoides mccartyi (strain ATCC BAA-2266 / KCTC 15142 / 195) (Dehalococcoides ethenogenes (strain 195)), this protein is Bifunctional protein FolD.